A 741-amino-acid chain; its full sequence is Ribosome-releasing factor 2, mitochondrial (741 aa).

A mitochondrion-targeting transit peptide spans 1–29 (MLRYVYFNGFGMRQGLLKRCSSHILRRSY). Residues 31-310 (SDIRNIGILA…AVNHYLPAPE (280 aa)) form the tr-type G domain. Residues 40–47 (AHIDAGKT), 104–108 (DTPGH), and 158–161 (NKMD) each bind GTP. Residues 408-436 (SLKNAEKRFKQQRHSDGMSEEEDDDEDHH) form a disordered region. Basic and acidic residues predominate over residues 411–424 (NAEKRFKQQRHSDG).

This sequence belongs to the TRAFAC class translation factor GTPase superfamily. Classic translation factor GTPase family. EF-G/EF-2 subfamily.

The protein resides in the mitochondrion. Its function is as follows. Mitochondrial GTPase that mediates the disassembly of ribosomes from messenger RNA at the termination of mitochondrial protein biosynthesis. Not involved in the GTP-dependent ribosomal translocation step during translation elongation. The polypeptide is Ribosome-releasing factor 2, mitochondrial (EF-G2) (Drosophila willistoni (Fruit fly)).